A 1865-amino-acid polypeptide reads, in one-letter code: COPII coat assembly protein SEC16 (1865 aa).

Composition is skewed to polar residues over residues 1-10 (MVSDAPNSSW) and 41-51 (EDNTTQSNTAG). Disordered stretches follow at residues 1–166 (MVSD…TVSP), 193–820 (EIEE…PREA), 1301–1339 (FVSG…PSAS), 1355–1665 (SSLP…AKLG), and 1681–1842 (NKNA…ARKG). Over residues 85–99 (SAPDTETPEQTGPAE) the composition is skewed to low complexity. Residues 114–123 (KHLSTMSFTR) show a composition bias toward polar residues. Residues 213 to 225 (ATQNAQDDTTTQQ) are compositionally biased toward low complexity. Residues 252-262 (SADQDATQEGQ) show a composition bias toward polar residues. Positions 270–281 (FAEETVGEEDDF) are enriched in acidic residues. The segment covering 344 to 359 (KAQEGENLDEKWKEMF) has biased composition (basic and acidic residues). 2 stretches are compositionally biased toward acidic residues: residues 360–369 (GDDDAEEGFL) and 387–400 (SDDE…ETEQ). The segment covering 469-483 (TAAPYAPPSTAPPAP) has biased composition (pro residues). Positions 498-510 (EKNKAQSFVDKKG) are enriched in basic and acidic residues. Low complexity-rich tracts occupy residues 553 to 585 (SASM…APSS) and 613 to 632 (KSAA…SRYS). The segment covering 683 to 697 (LAERRSSSSLHDHRL) has biased composition (basic and acidic residues). Over residues 724 to 733 (GPAPPHPMSP) the composition is skewed to pro residues. The segment covering 744–760 (GARQTPPHTAPSGQTVL) has biased composition (polar residues). Residues 773–784 (LAPPYDFAPPPR) are compositionally biased toward pro residues. Positions 1309–1318 (SGQGPTGEGE) are enriched in gly residues. The segment covering 1330-1339 (PTISRSPSAS) has biased composition (polar residues). Residues 1362 to 1377 (VPASAPATRAASRYAP) show a composition bias toward low complexity. 2 stretches are compositionally biased toward polar residues: residues 1382–1393 (ATGSNSRPSTSA) and 1442–1474 (TPQS…TSAP). The span at 1539 to 1557 (SYEAPSYQPYSYEPPSYEP) shows a compositional bias: low complexity. The span at 1594–1625 (PAEKSRAEKDRENDEMFRKAAEEDAQRVEAAK) shows a compositional bias: basic and acidic residues. Composition is skewed to low complexity over residues 1701 to 1710 (GAPRSVSASP) and 1735 to 1760 (PPRS…SPGS). The span at 1790–1803 (LGGGGSGVGGGGGG) shows a compositional bias: gly residues. Over residues 1811-1833 (PPTSLSNSSSIDDLLGAAGPRKP) the composition is skewed to low complexity.

The protein belongs to the SEC16 family.

The protein resides in the endoplasmic reticulum membrane. Its function is as follows. Involved in the initiation of assembly of the COPII coat required for the formation of transport vesicles from the endoplasmic reticulum (ER) and the selection of cargo molecules. Also involved in autophagy. The chain is COPII coat assembly protein SEC16 (SEC16) from Chaetomium globosum (strain ATCC 6205 / CBS 148.51 / DSM 1962 / NBRC 6347 / NRRL 1970) (Soil fungus).